A 268-amino-acid polypeptide reads, in one-letter code: MDIVKNYLIAFDQYTANFRWESGVTPLSSYVFPFSTSVIYVLVIFALQAIMKNKKGMVLKGFSIIHNINLIILSFSMMSGVMYAAYQQYLEQGAFSLVCEQSSQSVQGRIGFWIYIFYLSKYYELVDTVILALKKKPIIFLHIFHHMAMVPVTWQWLHDQWLVGSWWCTLVNSFIHVLMYYYYLQTTLGNPCWFKKYITKAQIVQFLTGTAMVSYWFVIRDSEKCQAPLSPAIVSNTINSFFIILFGKFYYDSYKSNSRRQEKLNKVE.

Helical transmembrane passes span 31–51 (VFPFSTSVIYVLVIFALQAIM), 62–82 (FSIIHNINLIILSFSMMSGVM), 110–130 (IGFWIYIFYLSKYYELVDTVI), 137–157 (PIIFLHIFHHMAMVPVTWQWL), 161–181 (WLVGSWWCTLVNSFIHVLMYY), 198–218 (ITKAQIVQFLTGTAMVSYWFV), and 227–247 (APLSPAIVSNTINSFFIILFG).

It belongs to the ELO family.

Its subcellular location is the membrane. The catalysed reaction is a very-long-chain acyl-CoA + malonyl-CoA + H(+) = a very-long-chain 3-oxoacyl-CoA + CO2 + CoA. In terms of biological role, could be implicated in synthesis of very long chain fatty acids. This Dictyostelium discoideum (Social amoeba) protein is Fatty acid elongase sre1 (sre1).